The chain runs to 340 residues: TATA-box-binding protein (340 aa).

A disordered region spans residues 1-78 (MNLNSPAVSM…HSLQGSSMQM (78 aa)). Residues 57–68 (PQSIQPMQSQQM) are compositionally biased toward low complexity. Polar residues predominate over residues 69 to 78 (HSLQGSSMQM). Tandem repeats lie at residues 168–244 (LQNI…ARIV) and 258–335 (VQNM…YPIL).

It belongs to the TBP family. As to quaternary structure, component of the TFIID basal transcription factor complex, composed of TATA-box-binding protein tbp-1, and a number of TBP-associated factors (TAFs). Binds DNA as monomer.

It localises to the nucleus. In terms of biological role, the TFIID basal transcription factor complex plays a major role in the initiation of RNA polymerase II (Pol II)-dependent transcription. TFIID recognizes and binds promoters via its subunit tbp-1, a TATA-box-binding protein, and promotes assembly of the pre-initiation complex (PIC). The TFIID complex consists of tbp-1 and TBP-associated factors (TAFs). General transcription factor that functions at the core of the TFIID complex. This is TATA-box-binding protein (tbp-1) from Caenorhabditis elegans.